The primary structure comprises 493 residues: Guanosine-5'-triphosphate,3'-diphosphate pyrophosphatase (493 aa).

It belongs to the GppA/Ppx family. GppA subfamily.

The enzyme catalyses guanosine 3'-diphosphate 5'-triphosphate + H2O = guanosine 3',5'-bis(diphosphate) + phosphate + H(+). Its pathway is purine metabolism; ppGpp biosynthesis; ppGpp from GTP: step 2/2. Its function is as follows. Catalyzes the conversion of pppGpp to ppGpp. Guanosine pentaphosphate (pppGpp) is a cytoplasmic signaling molecule which together with ppGpp controls the 'stringent response', an adaptive process that allows bacteria to respond to amino acid starvation, resulting in the coordinated regulation of numerous cellular activities. In Salmonella paratyphi A (strain ATCC 9150 / SARB42), this protein is Guanosine-5'-triphosphate,3'-diphosphate pyrophosphatase.